The sequence spans 1034 residues: Translation initiation factor IF-2 (1034 aa).

Disordered regions lie at residues 118–140 (AAEA…QSVE) and 154–446 (EAEA…NESA). Low complexity-rich tracts occupy residues 162–178 (TPPV…AAAP) and 212–228 (PAVK…PAAS). Residues 304–315 (DRAREDARRAAE) are compositionally biased toward basic and acidic residues. One can recognise a tr-type G domain in the interval 535 to 702 (PRAPVVTVMG…NVLLQAEILE (168 aa)). A G1 region spans residues 544–551 (GHVDHGKT). 544–551 (GHVDHGKT) is a GTP binding site. A G2 region spans residues 569–573 (GITQH). The tract at residues 590–593 (DTPG) is G3. Residues 590-594 (DTPGH) and 644-647 (NKID) each bind GTP. The G4 stretch occupies residues 644 to 647 (NKID). Positions 680-682 (SAK) are G5.

This sequence belongs to the TRAFAC class translation factor GTPase superfamily. Classic translation factor GTPase family. IF-2 subfamily.

Its subcellular location is the cytoplasm. Functionally, one of the essential components for the initiation of protein synthesis. Protects formylmethionyl-tRNA from spontaneous hydrolysis and promotes its binding to the 30S ribosomal subunits. Also involved in the hydrolysis of GTP during the formation of the 70S ribosomal complex. This Bordetella avium (strain 197N) protein is Translation initiation factor IF-2.